Consider the following 388-residue polypeptide: Probable aspartic-type endopeptidase MCYG_06955 (388 aa).

An N-terminal signal peptide occupies residues 1–21 (MMGPFFYFTAYVSLLFAFTQA). N-linked (GlcNAc...) asparagine glycosylation is found at Asn-82 and Asn-104. The Peptidase A1 domain occupies 96 to 384 (FVNEITVGND…DYDGPKIGFA (289 aa)). The active site involves Asp-112. Asn-209 and Asn-261 each carry an N-linked (GlcNAc...) asparagine glycan. The active site involves Asp-278. N-linked (GlcNAc...) asparagine glycans are attached at residues Asn-315 and Asn-320.

It belongs to the peptidase A1 family.

It is found in the secreted. Functionally, probable aspartic-type endopeptidase which contributes to virulence. The chain is Probable aspartic-type endopeptidase MCYG_06955 from Arthroderma otae (strain ATCC MYA-4605 / CBS 113480) (Microsporum canis).